The primary structure comprises 282 residues: Pantothenate synthetase (282 aa).

Methionine 26–histidine 33 is a binding site for ATP. Catalysis depends on histidine 33, which acts as the Proton donor. A (R)-pantoate-binding site is contributed by glutamine 57. Glutamine 57 provides a ligand contact to beta-alanine. Residue glycine 144 to aspartate 147 participates in ATP binding. Residue glutamine 150 coordinates (R)-pantoate. ATP contacts are provided by residues leucine 173 and leucine 181–arginine 184.

This sequence belongs to the pantothenate synthetase family. Homodimer.

The protein resides in the cytoplasm. It catalyses the reaction (R)-pantoate + beta-alanine + ATP = (R)-pantothenate + AMP + diphosphate + H(+). It participates in cofactor biosynthesis; (R)-pantothenate biosynthesis; (R)-pantothenate from (R)-pantoate and beta-alanine: step 1/1. Catalyzes the condensation of pantoate with beta-alanine in an ATP-dependent reaction via a pantoyl-adenylate intermediate. The polypeptide is Pantothenate synthetase (Albidiferax ferrireducens (strain ATCC BAA-621 / DSM 15236 / T118) (Rhodoferax ferrireducens)).